Here is a 178-residue protein sequence, read N- to C-terminus: UPF0228 protein MA_4223 (178 aa).

The protein belongs to the UPF0228 family.

The protein is UPF0228 protein MA_4223 of Methanosarcina acetivorans (strain ATCC 35395 / DSM 2834 / JCM 12185 / C2A).